An 880-amino-acid chain; its full sequence is Leucine--tRNA ligase (880 aa).

Positions 46 to 56 match the 'HIGH' region motif; sequence PYPSGALHMGH. The short motif at 638 to 642 is the 'KMSKS' region element; the sequence is KMSKS. Lys-641 contributes to the ATP binding site.

Belongs to the class-I aminoacyl-tRNA synthetase family.

It is found in the cytoplasm. It carries out the reaction tRNA(Leu) + L-leucine + ATP = L-leucyl-tRNA(Leu) + AMP + diphosphate. In Stenotrophomonas maltophilia (strain R551-3), this protein is Leucine--tRNA ligase.